The following is a 371-amino-acid chain: MKDITLVLLAAGDSTRFKAPFKKQWIRIGEIPLWQYVAKDLSQKCDFSDIIIVANEKEISYMKKIERNFKYAKGGKLRQNSLANALKKVKSEFVFVSDTARAEISKDLIGRLINECEKFDCVSPFLGVVDTTYLGRNQIDRNDLKLIQTPQISRANLLKKALESNEIFTDDSAAVAFAGGKLGFVEGDEKARKITFTSDLAHFDFTPASGTIFTGNGFDVHAFAKGEFITLGGVKIPCEYSLVGHSDADAAIHALMDAILGACGLGDIGELFPDTDDSFKGIDSKILLQKVVNFVHLLGFKIINADITIIAQKPKISPYKEKMCEILSEILQTSRVNVKASTTEKLGFVGRVEGVAAIASANLGYFDWRKF.

A 2-C-methyl-D-erythritol 4-phosphate cytidylyltransferase region spans residues Met1–Ile212. Positions Phe213–Phe371 are 2-C-methyl-D-erythritol 2,4-cyclodiphosphate synthase. The a divalent metal cation site is built by Asp219 and His221. Residues Asp219–His221 and His245–Ser246 each bind 4-CDP-2-C-methyl-D-erythritol 2-phosphate. His253 lines the a divalent metal cation pocket. 4-CDP-2-C-methyl-D-erythritol 2-phosphate-binding positions include Asp267–Gly269, Phe272–Asp276, Ser341–Glu344, Phe348, and Arg351.

The protein in the N-terminal section; belongs to the IspD/TarI cytidylyltransferase family. IspD subfamily. It in the C-terminal section; belongs to the IspF family. It depends on a divalent metal cation as a cofactor.

It carries out the reaction 2-C-methyl-D-erythritol 4-phosphate + CTP + H(+) = 4-CDP-2-C-methyl-D-erythritol + diphosphate. The catalysed reaction is 4-CDP-2-C-methyl-D-erythritol 2-phosphate = 2-C-methyl-D-erythritol 2,4-cyclic diphosphate + CMP. It participates in isoprenoid biosynthesis; isopentenyl diphosphate biosynthesis via DXP pathway; isopentenyl diphosphate from 1-deoxy-D-xylulose 5-phosphate: step 2/6. Its pathway is isoprenoid biosynthesis; isopentenyl diphosphate biosynthesis via DXP pathway; isopentenyl diphosphate from 1-deoxy-D-xylulose 5-phosphate: step 4/6. Bifunctional enzyme that catalyzes the formation of 4-diphosphocytidyl-2-C-methyl-D-erythritol from CTP and 2-C-methyl-D-erythritol 4-phosphate (MEP) (IspD), and catalyzes the conversion of 4-diphosphocytidyl-2-C-methyl-D-erythritol 2-phosphate (CDP-ME2P) to 2-C-methyl-D-erythritol 2,4-cyclodiphosphate (ME-CPP) with a corresponding release of cytidine 5-monophosphate (CMP) (IspF). This chain is Bifunctional enzyme IspD/IspF, found in Campylobacter hominis (strain ATCC BAA-381 / DSM 21671 / CCUG 45161 / LMG 19568 / NCTC 13146 / CH001A).